Consider the following 195-residue polypeptide: Endoribonuclease YbeY (195 aa).

His152, His156, and His162 together coordinate Zn(2+).

This sequence belongs to the endoribonuclease YbeY family. Requires Zn(2+) as cofactor.

It is found in the cytoplasm. In terms of biological role, single strand-specific metallo-endoribonuclease involved in late-stage 70S ribosome quality control and in maturation of the 3' terminus of the 16S rRNA. This chain is Endoribonuclease YbeY, found in Rhodopseudomonas palustris (strain HaA2).